The primary structure comprises 756 residues: Polyribonucleotide nucleotidyltransferase (756 aa).

The Mg(2+) site is built by D492 and D498. The KH domain occupies 559-618; sequence PQHAEVFVNPDVIRIIIGPGGKNIKAITAATGASIDIEDSGKVSIFAPTYEAMEMAREMV. The S1 motif domain occupies 628-702; the sequence is GKNYVGKVRK…SRKAVLLEEQ (75 aa). The disordered stretch occupies residues 703–756; that stretch reads GVEWNPEDTARPSGPPRDRGDRGDRGGRGDRGGDRRGGDRGGRGGDRGRGGDRR. Positions 718–756 are enriched in basic and acidic residues; sequence PRDRGDRGDRGGRGDRGGDRRGGDRGGRGGDRGRGGDRR.

The protein belongs to the polyribonucleotide nucleotidyltransferase family. Requires Mg(2+) as cofactor.

The protein resides in the cytoplasm. It catalyses the reaction RNA(n+1) + phosphate = RNA(n) + a ribonucleoside 5'-diphosphate. Functionally, involved in mRNA degradation. Catalyzes the phosphorolysis of single-stranded polyribonucleotides processively in the 3'- to 5'-direction. The protein is Polyribonucleotide nucleotidyltransferase of Nitratidesulfovibrio vulgaris (strain DSM 19637 / Miyazaki F) (Desulfovibrio vulgaris).